The chain runs to 122 residues: Small ribosomal subunit protein bS6 (122 aa).

The disordered stretch occupies residues 95 to 122 (AETAPSPMMKEVQREEAKKAAAQSEQAA).

The protein belongs to the bacterial ribosomal protein bS6 family.

Its function is as follows. Binds together with bS18 to 16S ribosomal RNA. This is Small ribosomal subunit protein bS6 from Ralstonia nicotianae (strain ATCC BAA-1114 / GMI1000) (Ralstonia solanacearum).